The primary structure comprises 494 residues: Guanosine-5'-triphosphate,3'-diphosphate pyrophosphatase (494 aa).

The protein belongs to the GppA/Ppx family. GppA subfamily.

The enzyme catalyses guanosine 3'-diphosphate 5'-triphosphate + H2O = guanosine 3',5'-bis(diphosphate) + phosphate + H(+). The protein operates within purine metabolism; ppGpp biosynthesis; ppGpp from GTP: step 2/2. Functionally, catalyzes the conversion of pppGpp to ppGpp. Guanosine pentaphosphate (pppGpp) is a cytoplasmic signaling molecule which together with ppGpp controls the 'stringent response', an adaptive process that allows bacteria to respond to amino acid starvation, resulting in the coordinated regulation of numerous cellular activities. This Escherichia coli O139:H28 (strain E24377A / ETEC) protein is Guanosine-5'-triphosphate,3'-diphosphate pyrophosphatase.